The primary structure comprises 954 residues: Glycine dehydrogenase (decarboxylating) (954 aa).

Lys704 is modified (N6-(pyridoxal phosphate)lysine).

The protein belongs to the GcvP family. As to quaternary structure, the glycine cleavage system is composed of four proteins: P, T, L and H. Pyridoxal 5'-phosphate serves as cofactor.

The enzyme catalyses N(6)-[(R)-lipoyl]-L-lysyl-[glycine-cleavage complex H protein] + glycine + H(+) = N(6)-[(R)-S(8)-aminomethyldihydrolipoyl]-L-lysyl-[glycine-cleavage complex H protein] + CO2. The glycine cleavage system catalyzes the degradation of glycine. The P protein binds the alpha-amino group of glycine through its pyridoxal phosphate cofactor; CO(2) is released and the remaining methylamine moiety is then transferred to the lipoamide cofactor of the H protein. This Vibrio parahaemolyticus serotype O3:K6 (strain RIMD 2210633) protein is Glycine dehydrogenase (decarboxylating).